Here is a 137-residue protein sequence, read N- to C-terminus: Large ribosomal subunit protein uL16 (137 aa).

It belongs to the universal ribosomal protein uL16 family. Part of the 50S ribosomal subunit.

Functionally, binds 23S rRNA and is also seen to make contacts with the A and possibly P site tRNAs. The sequence is that of Large ribosomal subunit protein uL16 from Coxiella burnetii (strain RSA 331 / Henzerling II).